The following is a 64-amino-acid chain: Cold shock protein CapA (64 aa).

One can recognise a CSD domain in the interval 7-64; sequence GTVKWFNDEKGFGFITPQGGGDDLFVHFKAIESDGFKSLKEGQTVSFVAEKGQKGMQA.

The protein resides in the cytoplasm. Functionally, affects cell viability at low temperatures. This chain is Cold shock protein CapA (capA), found in Pseudomonas fragi.